The sequence spans 215 residues: uncharacterized protein (215 aa).

Disordered stretches follow at residues 1 to 144 (MPKG…PYLR) and 156 to 215 (IQGH…GAPA). 4 stretches are compositionally biased toward low complexity: residues 16–29 (ASTP…ASPT), 49–58 (SSSWPKSPIK), 85–96 (SGSSSPGPSSSR), and 104–127 (STAA…RAAP).

This is an uncharacterized protein from Homo sapiens (Human).